The sequence spans 858 residues: DNA mismatch repair protein MutS (858 aa).

613 to 620 (GPNMAGKS) provides a ligand contact to ATP.

The protein belongs to the DNA mismatch repair MutS family.

In terms of biological role, this protein is involved in the repair of mismatches in DNA. It is possible that it carries out the mismatch recognition step. This protein has a weak ATPase activity. The chain is DNA mismatch repair protein MutS from Dehalococcoides mccartyi (strain ATCC BAA-2266 / KCTC 15142 / 195) (Dehalococcoides ethenogenes (strain 195)).